The chain runs to 413 residues: MNAEILAVGTELLMGQIANTNAQYISKRLNDIGVNVYYHSVVGDNSVRLKKCLLAALERCDLVIMTGGLGPTQDDLTKETVAEVLGKKLVLHEESLERIKTFFTRINRKMTDNNVKQAYLPEGCTVVENNSGTAPGCIIEDKGKIVVMLPGPPPEMMPMLDDTVIPYLAEKSGYRIVSKYLRVFGIGESQLEEMIMDLVDKQDRVTIATYAKDGQVTVRLTTKARTEEEGFREILPLQNEIASRLKEALYSTEDEELEYVAAKMLIDNNITIATAESCTGGLISARLTDVPGISKVFNRGIVSYSNEAKMENLGVKPETLEKYGAVSSRTAMEMAEGVRKIASTDIGLAVTGIAGPDGGTDEKPVGLVYVALAHSLGTEVRELRLAGNRNRIRNLTVLNAFDMVRRYVMKLKG.

This sequence belongs to the CinA family.

This chain is Putative competence-damage inducible protein, found in Acetivibrio thermocellus (strain ATCC 27405 / DSM 1237 / JCM 9322 / NBRC 103400 / NCIMB 10682 / NRRL B-4536 / VPI 7372) (Clostridium thermocellum).